Consider the following 199-residue polypeptide: Imidazole glycerol phosphate synthase subunit HisH 2 (199 aa).

Residues 1–199 (MIAVIDVSGN…NNFLSLESTC (199 aa)) form the Glutamine amidotransferase type-1 domain. Cys-76 (nucleophile) is an active-site residue. Catalysis depends on residues His-177 and Glu-179.

Heterodimer of HisH and HisF.

It localises to the cytoplasm. The enzyme catalyses 5-[(5-phospho-1-deoxy-D-ribulos-1-ylimino)methylamino]-1-(5-phospho-beta-D-ribosyl)imidazole-4-carboxamide + L-glutamine = D-erythro-1-(imidazol-4-yl)glycerol 3-phosphate + 5-amino-1-(5-phospho-beta-D-ribosyl)imidazole-4-carboxamide + L-glutamate + H(+). The catalysed reaction is L-glutamine + H2O = L-glutamate + NH4(+). It participates in amino-acid biosynthesis; L-histidine biosynthesis; L-histidine from 5-phospho-alpha-D-ribose 1-diphosphate: step 5/9. In terms of biological role, IGPS catalyzes the conversion of PRFAR and glutamine to IGP, AICAR and glutamate. The HisH subunit provides the glutamine amidotransferase activity that produces the ammonia necessary to HisF for the synthesis of IGP and AICAR. The chain is Imidazole glycerol phosphate synthase subunit HisH 2 from Legionella pneumophila (strain Paris).